The chain runs to 79 residues: Mipartoxin-3 (79 aa).

Positions 1-21 are cleaved as a signal peptide; sequence MKTLLLTLVVVTIVCLDLGNS. Cystine bridges form between C24–C41, C34–C59, C63–C71, and C72–C77.

The protein belongs to the three-finger toxin family. Short-chain subfamily. In terms of tissue distribution, expressed by the venom gland.

The protein resides in the secreted. In terms of biological role, snake venom neurotoxin that blocks neuromuscular transmission, presenting a postsynaptic action through the nicotinic acetylcholine receptor (nAChR). Has no cytotoxic activity. In Micrurus mipartitus (Red-tailed coral snake), this protein is Mipartoxin-3.